The sequence spans 457 residues: Phosphomethylpyrimidine synthase (457 aa).

Substrate contacts are provided by residues Asn81, Met110, Tyr139, His175, 195–197, 236–239, and Glu275; these read SRG and DALR. His279 is a Zn(2+) binding site. Residue Tyr302 coordinates substrate. His343 serves as a coordination point for Zn(2+). 3 residues coordinate [4Fe-4S] cluster: Cys423, Cys426, and Cys431.

It belongs to the ThiC family. [4Fe-4S] cluster serves as cofactor.

The enzyme catalyses 5-amino-1-(5-phospho-beta-D-ribosyl)imidazole + S-adenosyl-L-methionine = 4-amino-2-methyl-5-(phosphooxymethyl)pyrimidine + CO + 5'-deoxyadenosine + formate + L-methionine + 3 H(+). It functions in the pathway cofactor biosynthesis; thiamine diphosphate biosynthesis. Functionally, catalyzes the synthesis of the hydroxymethylpyrimidine phosphate (HMP-P) moiety of thiamine from aminoimidazole ribotide (AIR) in a radical S-adenosyl-L-methionine (SAM)-dependent reaction. The chain is Phosphomethylpyrimidine synthase from Aquifex aeolicus (strain VF5).